Reading from the N-terminus, the 339-residue chain is Probable G-protein coupled receptor 33 (339 aa).

At Met-1 to Ala-30 the chain is on the extracellular side. N-linked (GlcNAc...) asparagine glycosylation is found at Asn-5 and Asn-19. The helical transmembrane segment at Ile-31–Met-53 threads the bilayer. Over Leu-54–Thr-64 the chain is Cytoplasmic. Residues Leu-65–Thr-86 traverse the membrane as a helical segment. The Extracellular segment spans residues Ser-87–Val-103. A disulfide bridge links Cys-101 with Cys-179. Residues Phe-104 to Val-124 form a helical membrane-spanning segment. Residues Asp-125–Arg-143 lie on the Cytoplasmic side of the membrane. A helical transmembrane segment spans residues Trp-144–Val-165. The Extracellular portion of the chain corresponds to Phe-166–Arg-209. Residues Phe-210–Thr-230 form a helical membrane-spanning segment. The Cytoplasmic segment spans residues Lys-231 to Val-246. Residues Met-247–Val-268 traverse the membrane as a helical segment. Topologically, residues Leu-269–Leu-283 are extracellular. Residues Ala-284–Gly-303 traverse the membrane as a helical segment. At Glu-304–Ile-339 the chain is on the cytoplasmic side.

It belongs to the G-protein coupled receptor 1 family.

The protein localises to the cell membrane. Its function is as follows. Orphan receptor; could be a chemoattractant receptor. This is Probable G-protein coupled receptor 33 (Gpr33) from Rattus rattus (Black rat).